The sequence spans 283 residues: Phospholipid phosphatase 1 (283 aa).

Residues M1–R6 lie on the Cytoplasmic side of the membrane. Positions T5–L7 match the PDZ-binding; involved in localization to the apical cell membrane motif. Residues L7–L27 form a helical membrane-spanning segment. Topologically, residues T28–T53 are extracellular. The chain crosses the membrane as a helical span at residues I54–G74. Topologically, residues E75 to S88 are cytoplasmic. The helical transmembrane segment at F89–V109 threads the bilayer. The Extracellular segment spans residues S110–R164. The tract at residues K120–P128 is phosphatase sequence motif I. A glycan (N-linked (GlcNAc...) asparagine) is linked at N142. Residues L165–Y185 traverse the membrane as a helical segment. The phosphatase sequence motif II stretch occupies residues Y168–H171. The Proton donors role is filled by H171. Topologically, residues L186–R199 are cytoplasmic. A helical membrane pass occupies residues P200–D220. The interval S216 to D227 is phosphatase sequence motif III. Over Y221–T229 the chain is Extracellular. Catalysis depends on H223, which acts as the Nucleophile. A helical membrane pass occupies residues V230–F250. Over K251–P283 the chain is Cytoplasmic. A disordered region spans residues K260–P283. A compositionally biased stretch (polar residues) spans H269–P283.

This sequence belongs to the PA-phosphatase related phosphoesterase family. In terms of assembly, forms functional homodimers and homooligomers that are not required for substrate recognition and catalytic activity. Can also form heterooligomers with PLPP2 and PLPP3. In terms of processing, N-glycosylated. N-linked sugars are of the complex type. N-glycosylation is not required for the phosphatase activity. In terms of tissue distribution, widely expressed. Highly expressed in kidney and lung. Almost undetectable in brain, heart, bone, muscle or spleen.

The protein resides in the cell membrane. It localises to the apical cell membrane. It is found in the membrane raft. Its subcellular location is the membrane. The protein localises to the caveola. It carries out the reaction a 1,2-diacyl-sn-glycero-3-phosphate + H2O = a 1,2-diacyl-sn-glycerol + phosphate. The enzyme catalyses 1,2-dihexadecanoyl-sn-glycero-3-phosphate + H2O = 1,2-dihexadecanoyl-sn-glycerol + phosphate. It catalyses the reaction 1,2-di-(9Z-octadecenoyl)-sn-glycero-3-phosphate + H2O = 1,2-di-(9Z-octadecenoyl)-sn-glycerol + phosphate. The catalysed reaction is a monoacyl-sn-glycero-3-phosphate + H2O = a monoacylglycerol + phosphate. It carries out the reaction (9Z)-octadecenoyl-sn-glycero-3-phosphate + H2O = (9Z-octadecenoyl)-glycerol + phosphate. The enzyme catalyses a 1-acyl-sn-glycero-3-phosphate + H2O = a 1-acyl-sn-glycerol + phosphate. It catalyses the reaction 1-(9Z-octadecenoyl)-sn-glycero-3-phosphate + H2O = 1-(9Z-octadecenoyl)-sn-glycerol + phosphate. The catalysed reaction is a 1,2-diacyl-sn-glycerol 3-diphosphate + H2O = a 1,2-diacyl-sn-glycero-3-phosphate + phosphate + H(+). It carries out the reaction sphing-4-enine 1-phosphate + H2O = sphing-4-enine + phosphate. The enzyme catalyses an N-acylsphing-4-enine 1-phosphate + H2O = an N-acylsphing-4-enine + phosphate. It catalyses the reaction N-(octanoyl)-sphing-4-enine-1-phosphate + H2O = N-octanoylsphing-4-enine + phosphate. The catalysed reaction is N-(9Z-octadecenoyl)-ethanolamine phosphate + H2O = N-(9Z-octadecenoyl) ethanolamine + phosphate. It carries out the reaction 1-hexadecanoyl-2-(9Z-octadecenoyl)-sn-glycero-3-phosphate + H2O = 1-hexadecanoyl-2-(9Z-octadecenoyl)-sn-glycerol + phosphate. It participates in lipid metabolism; phospholipid metabolism. Its activity is regulated as follows. Magnesium-independent phospholipid phosphatase. Insensitive to N-ethylmaleimide. Its function is as follows. Magnesium-independent phospholipid phosphatase of the plasma membrane that catalyzes the dephosphorylation of a variety of glycerolipid and sphingolipid phosphate esters including phosphatidate/PA, lysophosphatidate/LPA, diacylglycerol pyrophosphate/DGPP, sphingosine 1-phosphate/S1P and ceramide 1-phosphate/C1P. Also acts on N-oleoyl ethanolamine phosphate/N-(9Z-octadecenoyl)-ethanolamine phosphate, a potential physiological compound. Through its extracellular phosphatase activity allows both the hydrolysis and the cellular uptake of these bioactive lipid mediators from the milieu, regulating signal transduction in different cellular processes. It is for instance essential for the extracellular hydrolysis of S1P and subsequent conversion into intracellular S1P. Involved in the regulation of inflammation, platelets activation, cell proliferation and migration among other processes. May also have an intracellular activity to regulate phospholipid-mediated signaling pathways. The protein is Phospholipid phosphatase 1 of Mus musculus (Mouse).